A 465-amino-acid chain; its full sequence is Deoxyguanosinetriphosphate triphosphohydrolase-like protein (465 aa).

The segment at 1 to 22 (MKWDKLLNDKRRRESGVTRSKN) is disordered. Residues 63-252 (RLTHSMEVST…LEVADDIAYL (190 aa)) enclose the HD domain.

This sequence belongs to the dGTPase family. Type 3 subfamily.

This chain is Deoxyguanosinetriphosphate triphosphohydrolase-like protein, found in Listeria monocytogenes serovar 1/2a (strain ATCC BAA-679 / EGD-e).